Consider the following 201-residue polypeptide: ATP-dependent Clp protease proteolytic subunit (201 aa).

The active-site Nucleophile is the Ser101. His126 is an active-site residue.

Belongs to the peptidase S14 family. As to quaternary structure, fourteen ClpP subunits assemble into 2 heptameric rings which stack back to back to give a disk-like structure with a central cavity, resembling the structure of eukaryotic proteasomes.

The protein resides in the cytoplasm. It carries out the reaction Hydrolysis of proteins to small peptides in the presence of ATP and magnesium. alpha-casein is the usual test substrate. In the absence of ATP, only oligopeptides shorter than five residues are hydrolyzed (such as succinyl-Leu-Tyr-|-NHMec, and Leu-Tyr-Leu-|-Tyr-Trp, in which cleavage of the -Tyr-|-Leu- and -Tyr-|-Trp bonds also occurs).. Cleaves peptides in various proteins in a process that requires ATP hydrolysis. Has a chymotrypsin-like activity. Plays a major role in the degradation of misfolded proteins. The protein is ATP-dependent Clp protease proteolytic subunit of Francisella tularensis subsp. tularensis (strain FSC 198).